A 221-amino-acid polypeptide reads, in one-letter code: Ribonuclease T (221 aa).

Residues 20–194 (VVIDIETAGF…YDTLQTANLF (175 aa)) form the Exonuclease domain. The Mg(2+) site is built by aspartate 23, glutamate 25, histidine 181, and aspartate 186. Residue histidine 181 is the Proton donor/acceptor of the active site.

Belongs to the RNase T family. As to quaternary structure, homodimer. It depends on Mg(2+) as a cofactor.

In terms of biological role, trims short 3' overhangs of a variety of RNA species, leaving a one or two nucleotide 3' overhang. Responsible for the end-turnover of tRNA: specifically removes the terminal AMP residue from uncharged tRNA (tRNA-C-C-A). Also appears to be involved in tRNA biosynthesis. The sequence is that of Ribonuclease T from Buchnera aphidicola subsp. Acyrthosiphon pisum (strain APS) (Acyrthosiphon pisum symbiotic bacterium).